The following is a 295-amino-acid chain: Inositol polyphosphate multikinase IPK2 (295 aa).

Residues 1 to 21 (MASDLRPPEHQVAGHRASADK) form a disordered region.

The protein belongs to the inositol phosphokinase (IPK) family.

The enzyme catalyses 1D-myo-inositol 1,4,5-trisphosphate + 2 ATP = 1D-myo-inositol 1,3,4,5,6-pentakisphosphate + 2 ADP + 2 H(+). The catalysed reaction is 1D-myo-inositol 1,3,4,6-tetrakisphosphate + ATP = 1D-myo-inositol 1,3,4,5,6-pentakisphosphate + ADP + H(+). Inositol phosphate kinase with a broad substrate specificity. Phosphorylates inositol 1,4,5-trisphosphate (Ins(1,4,5)P3), inositol 1,4,5,6-tetrakisphosphate (Ins(1,4,5,6)P4), inositol 1,3,4,5-tetrakisphosphate (Ins(1,3,4,5)P4), inositol 1,3,4,6-tetrakisphosphate (Ins(1,3,4,6)P4) and inositol 1,2,3,4,6-pentakisphosphate (Ins(1,2,3,4,6)P5) but not inositol 1,4-bisphosphate (Ins(1,4)P2), inositol 1,3,4-trisphosphate (Ins(1,3,4)P3), inositol 1,2,6-trisphosphate (Ins(1,2,6)P3), inositol 3,4,5,6-tetrakisphosphate (Ins(3,4,5,6)P4), inositol 1,3,4,5,6-pentakisphosphate (Ins(1,3,4,5,6)P5), inositol 1,2,4,5,6-pentakisphosphate (Ins(1,2,4,5,6)P5) or inositol hexakisphosphate (InsP6). Regulates pollen and root development probably through the regulation of InsP3-mediated calcium accumulation. The protein is Inositol polyphosphate multikinase IPK2 of Oryza sativa subsp. indica (Rice).